The sequence spans 116 residues: Nucleoid-associated protein PMT9312_0020 (116 aa).

The protein belongs to the YbaB/EbfC family. Homodimer.

The protein resides in the cytoplasm. It localises to the nucleoid. Binds to DNA and alters its conformation. May be involved in regulation of gene expression, nucleoid organization and DNA protection. In Prochlorococcus marinus (strain MIT 9312), this protein is Nucleoid-associated protein PMT9312_0020.